Consider the following 105-residue polypeptide: Pyrimidine/purine nucleoside phosphorylase (105 aa).

Belongs to the nucleoside phosphorylase PpnP family.

It carries out the reaction a purine D-ribonucleoside + phosphate = a purine nucleobase + alpha-D-ribose 1-phosphate. It catalyses the reaction adenosine + phosphate = alpha-D-ribose 1-phosphate + adenine. The enzyme catalyses cytidine + phosphate = cytosine + alpha-D-ribose 1-phosphate. The catalysed reaction is guanosine + phosphate = alpha-D-ribose 1-phosphate + guanine. It carries out the reaction inosine + phosphate = alpha-D-ribose 1-phosphate + hypoxanthine. It catalyses the reaction thymidine + phosphate = 2-deoxy-alpha-D-ribose 1-phosphate + thymine. The enzyme catalyses uridine + phosphate = alpha-D-ribose 1-phosphate + uracil. The catalysed reaction is xanthosine + phosphate = alpha-D-ribose 1-phosphate + xanthine. Functionally, catalyzes the phosphorolysis of diverse nucleosides, yielding D-ribose 1-phosphate and the respective free bases. Can use uridine, adenosine, guanosine, cytidine, thymidine, inosine and xanthosine as substrates. Also catalyzes the reverse reactions. The polypeptide is Pyrimidine/purine nucleoside phosphorylase (Acidovorax ebreus (strain TPSY) (Diaphorobacter sp. (strain TPSY))).